Consider the following 494-residue polypeptide: Rho GTPase-activating protein 19 (494 aa).

The residue at position 2 (A2) is an N-acetylalanine. 2 positions are modified to phosphoserine: S7 and S31. The 207-residue stretch at 102-308 (MSLKRKEKGV…FMIKHSQKLF (207 aa)) folds into the Rho-GAP domain. Disordered stretches follow at residues 349–368 (KSQK…TQHH) and 399–421 (QSLT…ARSR). Over residues 354 to 368 (NRVDSCPHQEETQHH) the composition is skewed to basic and acidic residues. Polar residues predominate over residues 399-415 (QSLTQTPGREPSTSQVQ). Phosphoserine is present on residues S422, S438, and S470. A Phosphothreonine modification is found at T478.

In terms of tissue distribution, strong expression in fetal heart, brain, placenta, lung, liver, skeletal muscle, kidney and pancreas. Weak expression in adult pancreas, spleen, thymus, and ovary.

It is found in the nucleus. In terms of biological role, GTPase activator for the Rho-type GTPases by converting them to an inactive GDP-bound state. This chain is Rho GTPase-activating protein 19 (ARHGAP19), found in Homo sapiens (Human).